The chain runs to 81 residues: uncharacterized protein (81 aa).

Positions 1-24 (MRKILKIVSLLILLLLLVYSFFSP) are cleaved as a signal peptide. At 25–28 (NSQL) the chain is on the extracellular side. The chain crosses the membrane as a helical span at residues 29 to 49 (FVFVQLIIIAFLIGFGINCFV). At 50 to 81 (KKERYQGTLYFVIAICNITINLDKINELIQSI) the chain is on the cytoplasmic side.

It localises to the cell membrane. This is an uncharacterized protein from Bacillus subtilis (strain 168).